The primary structure comprises 426 residues: Torsin-4A (426 aa).

The tract at residues 41–60 is disordered; it reads QPGTEPDSGTGTLGPTGSLG. Residues 48–60 show a composition bias toward low complexity; it reads SGTGTLGPTGSLG. Serine 58 and serine 76 each carry phosphoserine. Threonine 84 bears the Phosphothreonine mark. At serine 101 the chain carries Phosphoserine. Residues 117-133 form a helical membrane-spanning segment; sequence CLLLLVAIVGFQVLNAI. An ATP-binding site is contributed by 189-196; it reads GPSGVGKS.

The protein belongs to the ClpA/ClpB family. Torsin subfamily.

It localises to the membrane. The protein is Torsin-4A (Tor4a) of Mus musculus (Mouse).